A 384-amino-acid chain; its full sequence is DNA dC-&gt;dU-editing enzyme APOBEC-3G (384 aa).

Residues 1–60 (MKPHFRNTVERMYRDTFSYNFYNRPILSRRNTVWLCYEVKTKGPSRPPLDAKIFRGQVYS) form an essential for cytoplasmic localization region. A CMP/dCMP-type deaminase 1 domain is found at 29–138 (RRNTVWLCYE…PDYQEALRSL (110 aa)). Phosphothreonine; by PKA is present on threonine 32. (Microbial infection) Glycyl lysine isopeptide (Lys-Gly) (interchain with G-Cter in ubiquitin) cross-links involve residues lysine 42, lysine 52, and lysine 63. Residues histidine 65, cysteine 97, and cysteine 100 each contribute to the Zn(2+) site. Residues lysine 150 and lysine 163 each participate in a (Microbial infection) Glycyl lysine isopeptide (Lys-Gly) (interchain with G-Cter in ubiquitin) cross-link. The segment at 209–336 (EPWVRGRHET…TLAEAGAKIS (128 aa)) is necessary for homooligomerization. The segment at 213–215 (RGR) is interaction with DNA. Positions 214-328 (GRHETYLCYE…GRCQEGLRTL (115 aa)) constitute a CMP/dCMP-type deaminase 2 domain. Threonine 218 carries the post-translational modification Phosphothreonine; by PKA and CAMK2. Residue lysine 249 forms a (Microbial infection) Glycyl lysine isopeptide (Lys-Gly) (interchain with G-Cter in ubiquitin) linkage. Histidine 257 contributes to the Zn(2+) binding site. Glutamate 259 serves as the catalytic Proton donor. A (Microbial infection) Glycyl lysine isopeptide (Lys-Gly) (interchain with G-Cter in ubiquitin) cross-link involves residue lysine 270. Zn(2+) is bound by residues cysteine 288 and cysteine 291. Residues lysine 297, lysine 301, and lysine 303 each participate in a (Microbial infection) Glycyl lysine isopeptide (Lys-Gly) (interchain with G-Cter in ubiquitin) cross-link. The interaction with DNA stretch occupies residues 313–320 (RIYDDQGR). Lysine 334 is covalently cross-linked ((Microbial infection) Glycyl lysine isopeptide (Lys-Gly) (interchain with G-Cter in ubiquitin)).

Belongs to the cytidine and deoxycytidylate deaminase family. Homodimer. Homooligomer. Can bind RNA to form ribonucleoprotein complexes of high-molecular-mass (HMM) or low-molecular-mass (LMM). HMM is inactive and heterogeneous in protein composition because of binding nonselectively to cellular RNAs, which in turn are associated with variety of cellular proteins. The LMM form which is enzymatically active has few or no RNAs associated. Its ability to form homooligomer is distinct from its ability to assemble into HMM. Interacts with APOBEC3B, APOBEC3F, MOV10, AGO2, EIF4E, EIF4ENIF1, DCP2 and DDX6 in an RNA-dependent manner. Interacts with AGO1, AGO3 and PKA/PRKACA. In terms of assembly, (Microbial infection) Interacts with HIV-1 Vif; promoting its ubiquitination by a cullin-5-RING E3 ubiquitin-protein ligase complex (ECS complex) hijacked by the HIV-1 Vif. As to quaternary structure, (Microbial infection) Interacts with HIV-1 reverse transcriptase/ribonuclease H. (Microbial infection) Interacts with hepatitis B virus capsid protein. Zn(2+) is required as a cofactor. Post-translationally, (Microbial infection) Following infection by HIV-1, ubiquitinated by a cullin-5-RING E3 ubiquitin-protein ligase complex (ECS complex) hijacked by the HIV-1 Vif protein, leading to its degradation. Deubiquitinated by USP49; leading to stabilization. In terms of processing, phosphorylation at Thr-32 reduces its binding to HIV-1 Vif and subsequent ubiquitination and degradation thus promoting its antiviral activity. As to expression, expressed in spleen, testes, ovary and peripheral blood leukocytes and CD4+ lymphocytes. Also expressed in non-permissive peripheral blood mononuclear cells, and several tumor cell lines; no expression detected in permissive lymphoid and non-lymphoid cell lines. Exists only in the LMM form in peripheral blood-derived resting CD4 T-cells and monocytes, both of which are refractory to HIV-1 infection. LMM is converted to a HMM complex when resting CD4 T-cells are activated or when monocytes are induced to differentiate into macrophages. This change correlates with increased susceptibility of these cells to HIV-1 infection.

The protein resides in the cytoplasm. It localises to the nucleus. Its subcellular location is the P-body. It catalyses the reaction a 2'-deoxycytidine in single-stranded DNA + H2O + H(+) = a 2'-deoxyuridine in single-stranded DNA + NH4(+). With respect to regulation, (Microbial infection) Antiviral activity is neutralized by the HIV-1 virion infectivity factor (Vif), that prevents its incorporation into progeny virions by both inhibiting its translation and/or by inducing its ubiquitination and subsequent degradation by the 26S proteasome. Can also be neutralized by simian immunodeficiency virus sooty mangabey monkey virus (SIV-sm) and chimpanzee immunodeficiency virus (SIV-cpz) Vif. In terms of biological role, DNA deaminase (cytidine deaminase) which acts as an inhibitor of retrovirus replication and retrotransposon mobility via deaminase-dependent and -independent mechanisms. Exhibits potent antiviral activity against Vif-deficient HIV-1. After the penetration of retroviral nucleocapsids into target cells of infection and the initiation of reverse transcription, it can induce the conversion of cytosine to uracil in the minus-sense single-strand viral DNA, leading to G-to-A hypermutations in the subsequent plus-strand viral DNA. The resultant detrimental levels of mutations in the proviral genome, along with a deamination-independent mechanism that works prior to the proviral integration, together exert efficient antiretroviral effects in infected target cells. Selectively targets single-stranded DNA and does not deaminate double-stranded DNA or single- or double-stranded RNA. Exhibits antiviral activity also against simian immunodeficiency viruses (SIVs), hepatitis B virus (HBV), equine infectious anemia virus (EIAV), xenotropic MuLV-related virus (XMRV) and simian foamy virus (SFV). May inhibit the mobility of LTR and non-LTR retrotransposons. This is DNA dC-&gt;dU-editing enzyme APOBEC-3G from Homo sapiens (Human).